The following is a 298-amino-acid chain: ATP synthase gamma chain (298 aa).

It belongs to the ATPase gamma chain family. F-type ATPases have 2 components, CF(1) - the catalytic core - and CF(0) - the membrane proton channel. CF(1) has five subunits: alpha(3), beta(3), gamma(1), delta(1), epsilon(1). CF(0) has three main subunits: a, b and c.

The protein resides in the cell inner membrane. Its function is as follows. Produces ATP from ADP in the presence of a proton gradient across the membrane. The gamma chain is believed to be important in regulating ATPase activity and the flow of protons through the CF(0) complex. This Francisella philomiragia subsp. philomiragia (strain ATCC 25017 / CCUG 19701 / FSC 153 / O#319-036) protein is ATP synthase gamma chain.